The following is a 684-amino-acid chain: Zinc finger BED domain-containing protein RICESLEEPER 4 (684 aa).

The BED-type zinc finger occupies 54–113; it reads KRKSAIWEHFTLVDVSDGCKRASCIHCNQSLAYSSGSKNSGTSHLTRHIAEWCRVLKDRQ. 4 residues coordinate Zn(2+): Cys-77, Cys-80, His-101, and Cys-106. Positions 595-680 are HATC (Hobo-Ac-Tam3) domain; that stretch reads ELELYLEEAL…EALLCAKDWL (86 aa).

Homodimer.

The protein resides in the nucleus. In terms of biological role, transposase-like protein that is essential for plant growth and development. May regulate global gene expression by recruiting other cellular factors. The protein is Zinc finger BED domain-containing protein RICESLEEPER 4 of Oryza sativa subsp. japonica (Rice).